Reading from the N-terminus, the 311-residue chain is Glutaminase (311 aa).

The substrate site is built by serine 66, asparagine 116, glutamate 162, asparagine 169, tyrosine 193, tyrosine 245, and valine 263.

Belongs to the glutaminase family. Homotetramer.

The catalysed reaction is L-glutamine + H2O = L-glutamate + NH4(+). In Rhodopseudomonas palustris (strain ATCC BAA-98 / CGA009), this protein is Glutaminase.